The following is a 424-amino-acid chain: MKKVIITPSKLRGSVKIPPSKSMAHRAIICASLSKGESVISNIDFSEDIIATMEGMKSLGANIKVEKDKLIINGENILKDSNYKFIDCNESGSTLRFLVPISLIKDNRVNFIGRGNLGKRPLKTYYEIFEEQEIKYSYEEENLDLNIEGSLKGGEFKVKGNISSQFISGLLFTLPLLKDDSKIIITTELESKGYIDLTLDMIEKFGVTIKNNNYREFLIKGNQSYKPMNYKVEGDYSQAAFYFSAGALGSEINCLDLDLSSYQGDKECIEILEGMGARLIESQERSLSIIHGDLNGTIIDASQCPDIIPVLTVVAALSKGETRIINGERLRIKECDRLNAICTELNKLGADIKELKDGLIINGVKDLIGGEVYSHKDHRIAMSLAIASTRCKKEVIIKEPDCVKKSYPGFWEDFKSLGGILREE.

Lys21, Ser22, and Arg26 together coordinate 3-phosphoshikimate. Lys21 serves as a coordination point for phosphoenolpyruvate. The phosphoenolpyruvate site is built by Gly92 and Arg120. 3-phosphoshikimate-binding residues include Ser163, Ser164, Gln165, Ser191, Asp306, and Lys333. Gln165 contacts phosphoenolpyruvate. Asp306 (proton acceptor) is an active-site residue. Phosphoenolpyruvate contacts are provided by Arg337, Arg379, and Lys405.

Belongs to the EPSP synthase family. Monomer.

The protein localises to the cytoplasm. The enzyme catalyses 3-phosphoshikimate + phosphoenolpyruvate = 5-O-(1-carboxyvinyl)-3-phosphoshikimate + phosphate. It functions in the pathway metabolic intermediate biosynthesis; chorismate biosynthesis; chorismate from D-erythrose 4-phosphate and phosphoenolpyruvate: step 6/7. Catalyzes the transfer of the enolpyruvyl moiety of phosphoenolpyruvate (PEP) to the 5-hydroxyl of shikimate-3-phosphate (S3P) to produce enolpyruvyl shikimate-3-phosphate and inorganic phosphate. This Clostridium perfringens (strain 13 / Type A) protein is 3-phosphoshikimate 1-carboxyvinyltransferase.